Here is an 86-residue protein sequence, read N- to C-terminus: Beta-toxin Tz1 (86 aa).

The signal sequence occupies residues 1 to 20 (MTRFVLFICCFFLIGMVVEC). The LCN-type CS-alpha/beta domain maps to 21 to 83 (KDGYLVGNDG…TWDRATNRCG (63 aa)). Cystine bridges form between Cys-31/Cys-82, Cys-35/Cys-57, Cys-43/Cys-63, and Cys-47/Cys-65. Arg-84 carries the arginine amide modification.

It belongs to the long (4 C-C) scorpion toxin superfamily. Sodium channel inhibitor family. Beta subfamily. As to expression, expressed by the venom gland.

The protein localises to the secreted. Its function is as follows. Beta toxins bind voltage-independently at site-4 of sodium channels (Nav) and shift the voltage of activation toward more negative potentials thereby affecting sodium channel activation and promoting spontaneous and repetitive firing. Strongly affects skeletal muscle channels Nav1.4/SCN4A, poorly affects the neuronal channels Nav1.6/SCN8A and Nav1.2/SCN2A. Induces spastic paralysis of rear limbs, increased salivation, apnea, tachycardia and increased perspiration. In Tityus zulianus (Venezuelan scorpion), this protein is Beta-toxin Tz1.